Here is a 60-residue protein sequence, read N- to C-terminus: Small ribosomal subunit protein bS21 (60 aa).

The segment at 35-60 (REHYEKPSVKRKKKSEAARRRKSKVR) is disordered. Basic residues predominate over residues 43–60 (VKRKKKSEAARRRKSKVR).

The protein belongs to the bacterial ribosomal protein bS21 family.

The polypeptide is Small ribosomal subunit protein bS21 (Clostridium novyi (strain NT)).